A 63-amino-acid chain; its full sequence is LKCHKAQFPNIETQCKWQTLCFQRDVKPHPSSMIVLRGCTSSCGKGAMCCATDLCNGPSTPST.

Disulfide bonds link Cys-3-Cys-21, Cys-15-Cys-39, Cys-43-Cys-49, and Cys-50-Cys-55.

The protein belongs to the three-finger toxin family. Short-chain subfamily. Orphan group XVIII sub-subfamily. As to expression, expressed by the venom gland.

It is found in the secreted. Blocks both the muscle-twitch response to nerve stimulation and the response to exogenous acetylcholine. The polypeptide is Short neurotoxin 2 (Bungarus fasciatus (Banded krait)).